Consider the following 224-residue polypeptide: PKHD-type hydroxylase Shewana3_0717 (224 aa).

The Fe2OG dioxygenase domain maps to 78–176 (QFYPPLFNRY…RTAAFMWLQS (99 aa)). Fe cation contacts are provided by H96, D98, and H157. A 2-oxoglutarate-binding site is contributed by R167.

Requires Fe(2+) as cofactor. L-ascorbate serves as cofactor.

The chain is PKHD-type hydroxylase Shewana3_0717 from Shewanella sp. (strain ANA-3).